A 254-amino-acid chain; its full sequence is Large ribosomal subunit protein uL4 (254 aa).

It belongs to the universal ribosomal protein uL4 family. Part of the 50S ribosomal subunit.

One of the primary rRNA binding proteins, this protein initially binds near the 5'-end of the 23S rRNA. It is important during the early stages of 50S assembly. It makes multiple contacts with different domains of the 23S rRNA in the assembled 50S subunit and ribosome. Functionally, forms part of the polypeptide exit tunnel. In Methanothermobacter thermautotrophicus (strain ATCC 29096 / DSM 1053 / JCM 10044 / NBRC 100330 / Delta H) (Methanobacterium thermoautotrophicum), this protein is Large ribosomal subunit protein uL4.